The chain runs to 496 residues: MLO-like protein 15 (496 aa).

Residues 1–9 (MAGGGTTLE) lie on the Extracellular side of the membrane. A helical transmembrane segment spans residues 10–30 (YTPTWVVALVCSVIVSISFAV). Topologically, residues 31–59 (ERLIHRAGKHFKNNDQKQLFGALQKIKEE) are cytoplasmic. A helical transmembrane segment spans residues 60–80 (LMLVGFISLLLSVGQSKIAKI). Residues 81–147 (CISKELSEKF…MSLSALHELH (67 aa)) lie on the Extracellular side of the membrane. Residues 148–168 (IFIFVLAVAHIIFCLLTIVFG) traverse the membrane as a helical segment. Residues 169–269 (TMKIKQWKKW…KYLMRALNSD (101 aa)) lie on the Cytoplasmic side of the membrane. A helical membrane pass occupies residues 270–290 (FKKVVGISWYLWVFVVLFLLL). A topological domain (extracellular) is located at residue Asn291. The helical transmembrane segment at 292-312 (IVAWHVYFWLAFIPLILLLAV) threads the bilayer. Residues 313–355 (GTKLEHIITDLAHEVAEKHIAVEGDLVVRPSDDLFWFQSPRLV) are Cytoplasmic-facing. Residues 356–376 (LFLIHFILFQNSFEIAYFFFI) form a helical membrane-spanning segment. Topologically, residues 377 to 397 (LFQFGWDSCIMDHVKFVIPRL) are extracellular. The helical transmembrane segment at 398-418 (VIGVIIQLLCSYSTLPLYALV) threads the bilayer. Residues 419-496 (TQMGSSFKGA…KEKSEIAHHD (78 aa)) are Cytoplasmic-facing. The interval 432–453 (EQTQEHLVGWAKMAKRGVKKGA) is calmodulin-binding. The disordered stretch occupies residues 454-496 (TQVGTSHDATSPRPSIQLNSLLGKGSSQQNQNPKEKSEIAHHD). Polar residues predominate over residues 455-485 (QVGTSHDATSPRPSIQLNSLLGKGSSQQNQN). Positions 486-496 (PKEKSEIAHHD) are enriched in basic and acidic residues.

The protein belongs to the MLO family.

It localises to the membrane. Its function is as follows. May be involved in modulation of pathogen defense and leaf cell death. Activity seems to be regulated by Ca(2+)-dependent calmodulin binding and seems not to require heterotrimeric G proteins. The chain is MLO-like protein 15 (MLO15) from Arabidopsis thaliana (Mouse-ear cress).